A 262-amino-acid chain; its full sequence is MSKVFDAKVLAVYMVAPNTYYMEFDAPDIARLAVPGQFVHVRCGETNDPLLRRPISIHMVSRPKGVLALLFRVVGKGTEILSQQKPGDRVNMMGPLGRGFTLPLPGSKVAVAAGGIGAAPLVFLVQELANIKCQVTVYLGARDKRSILCDGQFIQMEAEVVIATDDGSLGFKGTVPELMKRHMDWRKTAMTYVCGPGIMMKEISTMLAEADVPGEVSLEERMGCGVGACLSCAVKISHHGQISNKRACFEGPVFPSWQVVWE.

The region spanning 2–102 (SKVFDAKVLA…MGPLGRGFTL (101 aa)) is the FAD-binding FR-type domain. Residues 53 to 56 (RPIS), 70 to 72 (LFR), and 77 to 78 (GT) each bind FAD. Cys224, Cys229, Cys232, and Cys248 together coordinate [2Fe-2S] cluster.

Belongs to the PyrK family. Heterotetramer of 2 PyrK and 2 PyrD type B subunits. However, the metal reductase complex seems to be composed of a heterooctamer of 4 PyrK and 4 PyrD subunits. The cofactor is FAD. It depends on [2Fe-2S] cluster as a cofactor.

Its subcellular location is the cytoplasm. Its pathway is pyrimidine metabolism; UMP biosynthesis via de novo pathway; orotate from (S)-dihydroorotate (NAD(+) route): step 1/1. In terms of biological role, responsible for channeling the electrons from the oxidation of dihydroorotate from the FMN redox center in the PyrD type B subunit to the ultimate electron acceptor NAD(+). Its function is as follows. Together with PyrD, also forms a metal reductase complex able to reduce Fe(III)-chelates to Fe(II)-chelates, as well as soluble Cr(VI) and U(VI), using NADH as electron donor. To a lesser extent, can also use NADPH as an electron donor. Is unable to reduce riboflavin and FMN with NADH as electron donor. May have an in vivo role in metal reduction in D.reducens, which is an organism capable of reducing contaminant heavy metals and radionuclides. This chain is Dihydroorotate dehydrogenase B (NAD(+)), electron transfer subunit, found in Desulforamulus reducens (strain ATCC BAA-1160 / DSM 100696 / MI-1) (Desulfotomaculum reducens).